An 88-amino-acid chain; its full sequence is Small ribosomal subunit protein uS12 (88 aa).

Residues 1–24 (RKGRRDKIGKVKTAALKGSPQRRG) form a disordered region. Asp81 is subject to 3-methylthioaspartic acid.

Belongs to the universal ribosomal protein uS12 family. As to quaternary structure, part of the 30S ribosomal subunit. Contacts proteins S8 and S17. May interact with IF1 in the 30S initiation complex.

Functionally, with S4 and S5 plays an important role in translational accuracy. Interacts with and stabilizes bases of the 16S rRNA that are involved in tRNA selection in the A site and with the mRNA backbone. Located at the interface of the 30S and 50S subunits, it traverses the body of the 30S subunit contacting proteins on the other side and probably holding the rRNA structure together. The combined cluster of proteins S8, S12 and S17 appears to hold together the shoulder and platform of the 30S subunit. The sequence is that of Small ribosomal subunit protein uS12 (rpsL) from Mycobacterium szulgai.